The following is a 1081-amino-acid chain: Teashirt homolog 3 (1081 aa).

2 disordered regions span residues 141-161 (PSSE…SSCG) and 238-257 (HYRD…WSKP). Positions 148-161 (GSSSSSSSSSSSCG) are enriched in low complexity. C2H2-type zinc fingers lie at residues 214-238 (FRCK…ETGH) and 275-299 (LKCM…KTKH). Basic and acidic residues predominate over residues 238–247 (HYRDDNHETD). The segment at 325-364 (SLELELPSSPDSTGGTPKATISDTNDALQKNSNPYITPNN) is disordered. The segment covering 335–364 (DSTGGTPKATISDTNDALQKNSNPYITPNN) has biased composition (polar residues). The C2H2-type 3; atypical zinc-finger motif lies at 386 to 404 (LKCMECGSSHDTLQELTAH). The segment covering 473-491 (EVDKEKAVTDEKPKQKDKP) has biased composition (basic and acidic residues). Disordered regions lie at residues 473-502 (EVDK…DISS), 579-604 (NSEI…PMPK), 626-687 (EKMK…LAEP), and 855-897 (TESH…RQSN). Polar residues predominate over residues 581-603 (EIVSPTKNQTLVSPPSSQTSPMP). Residues 606-630 (NFHAMEELVKKVTEKVAKVEEKMKE) are a coiled coil. Ser682 is modified (phosphoserine). Over residues 856-869 (ESHTSKSSTPSSIS) the composition is skewed to low complexity. Residues 891–961 (RKGRQSNWNP…NVKYQLRRTG (71 aa)) constitute a DNA-binding region (homeobox; atypical). 2 C2H2-type zinc fingers span residues 976–998 (FFCN…LESH) and 1041–1064 (YQCK…SKTH).

It belongs to the teashirt C2H2-type zinc-finger protein family. As to quaternary structure, interacts (via homeobox domain) with APBB1 (via PID domain 1). Interacts (via N-terminus) with HDAC1 and HDAC2; the interaction is direct. Found in a trimeric complex with APBB1 and HDAC1; the interaction between HDAC1 and APBB1 is mediated by TSHZ3. Expressed in brain; strongly reduced in post-mortem elderly subjects with Alzheimer disease. Expressed in the fetal neocortex.

It is found in the nucleus. The protein resides in the cell projection. It localises to the growth cone. Transcriptional regulator involved in developmental processes. Functions in association with APBB1, SET and HDAC factors as a transcriptional repressor, that inhibits the expression of CASP4. TSHZ3-mediated transcription repression involves the recruitment of histone deacetylases HDAC1 and HDAC2. Associates with chromatin in a region surrounding the CASP4 transcriptional start site(s). Regulates the development of neurons involved in both respiratory rhythm and airflow control. Promotes maintenance of nucleus ambiguus (nA) motoneurons, which govern upper airway function, and establishes a respiratory rhythm generator (RRG) activity compatible with survival at birth. Involved in the differentiation of the proximal uretic smooth muscle cells during developmental processes. Involved in the up-regulation of myocardin, that directs the expression of smooth muscle cells in the proximal ureter. Involved in the modulation of glutamatergic synaptic transmission and long-term synaptic potentiation. This Homo sapiens (Human) protein is Teashirt homolog 3 (TSHZ3).